The chain runs to 331 residues: Ferredoxin--NADP reductase (331 aa).

FAD-binding residues include Glu-38, Gln-46, Tyr-51, Ala-91, Leu-125, Asp-282, and Ser-323.

The protein belongs to the ferredoxin--NADP reductase type 2 family. As to quaternary structure, homodimer. FAD serves as cofactor.

It carries out the reaction 2 reduced [2Fe-2S]-[ferredoxin] + NADP(+) + H(+) = 2 oxidized [2Fe-2S]-[ferredoxin] + NADPH. This Deinococcus geothermalis (strain DSM 11300 / CIP 105573 / AG-3a) protein is Ferredoxin--NADP reductase.